An 839-amino-acid polypeptide reads, in one-letter code: Sodium/hydrogen exchanger 3 (839 aa).

The first 32 residues, 1–32 (MPLGVRGTRREFRFPVWGLLLLALWMLPRALG), serve as a signal peptide directing secretion. Residues 33–56 (VEEIPGPDSHEKQGFQIVTFKWHH) lie on the Extracellular side of the membrane. Residues 57–79 (VQDPYIIALWILVASLAKIVFHL) traverse the membrane as a helical segment. Residues 80 to 87 (SHKVTSVV) are Cytoplasmic-facing. A helical transmembrane segment spans residues 88–107 (PESALLIVLGLILGGIVWAA). Over 108 to 116 (DHIASFTLT) the chain is Extracellular. Residues 117 to 134 (PTVFFFYLLPPIVLDAGY) traverse the membrane as a helical segment. The Cytoplasmic segment spans residues 135 to 137 (FMP). The chain crosses the membrane as a helical span at residues 138–173 (NRLFFGNLGTILLYAVIGTVWNAATTGLSLYGVYLS). A 1,2-diacyl-sn-glycero-3-phospho-(1D-myo-inositol)-binding residues include G143, G146, and T147. Residues 174 to 186 (GIMGDLSIGLLDF) lie on the Extracellular side of the membrane. A helical transmembrane segment spans residues 187–208 (LLFGSLIAAVDPVAVLAVFEEV). The Cytoplasmic portion of the chain corresponds to 209-210 (HV). A helical transmembrane segment spans residues 211–242 (NDVLFIIVFGESLLNDAVTVVLYNVFDSFVSL). Topologically, residues 243-249 (GADKVTG) are extracellular. The chain crosses the membrane as a helical span at residues 250-284 (VDCVKGIVSFFVVSLGGTLIGIIFAFLLSLVTRFT). Topologically, residues 285–286 (KH) are cytoplasmic. A helical transmembrane segment spans residues 287-309 (VRIIEPGFVFIISYLSYLTSEML). Residues 310-311 (SL) are Extracellular-facing. A helical membrane pass occupies residues 312–328 (SAILAITFCGICCQKYV). Residues 329-335 (KANISEQ) are Cytoplasmic-facing. A helical transmembrane segment spans residues 336-364 (SATTVRYTMKMLASGAETIIFMFLGISAV). The Extracellular portion of the chain corresponds to 365 to 372 (DPAIWTWN). Residues 373 to 394 (TAFILLTLVFISVYRAIGVVLQ) form a helical membrane-spanning segment. At 395-407 (TWLLNKYRMVQLE) the chain is on the cytoplasmic side. An a 1,2-diacyl-sn-glycero-3-phospho-(1D-myo-inositol)-binding site is contributed by M403. Residues 408-431 (IIDQVVMSYGGLRGAVAYALVVLL) traverse the membrane as a helical segment. The Extracellular portion of the chain corresponds to 432–438 (DEKKVKE). The helical transmembrane segment at 439–472 (KNLFVSTTIIVVFFTVIFQGLTIKPLVQWLKVKK) threads the bilayer. The Cytoplasmic portion of the chain corresponds to 473-839 (SEHREPKLNE…RSFLPESTHM (367 aa)). Residues Q502, I503, and H505 each contribute to the a 1,2-diacyl-sn-glycero-3-phospho-(1D-myo-inositol) site. 2 positions are modified to phosphoserine: S560 and S568. The tract at residues 581-595 (RPSTVEASVSYLLRE) is interaction with EZR. The segment at 596–673 (NVSTVCLDMQ…RKRLESFKST (78 aa)) is interaction with NHERF4. The interaction with AHCYL1 stretch occupies residues 597 to 701 (VSTVCLDMQA…GQKRRNSSIP (105 aa)). A phosphoserine mark is found at S598 and S613. The residue at position 669 (S669) is a Phosphoserine; by SGK1. Over residues 688 to 697 (KRERGQKRRN) the composition is skewed to basic residues. The tract at residues 688–710 (KRERGQKRRNSSIPNGKIPMESP) is disordered. 3 positions are modified to phosphoserine: S724, S815, and S818.

The protein belongs to the monovalent cation:proton antiporter 1 (CPA1) transporter (TC 2.A.36) family. Homodimer. Found in the forms of complex and dynamic macromolecular complexes. Binds NHERF1 and NHERF2. Interacts with CHP1, CHP2 and SHANK2. Interacts with NHERF4 and interactions decrease in response to elevated calcium ion levels. Interacts with PDZK1 (via C-terminal PDZ domain). Interacts with AHCYL1; the interaction is required for SLC9A3 activity. Interacts with EZR; interaction targets SLC9A3 to the apical membrane. Interacts with SNX27 (via PDZ domains); directs SLC9A3 membrane insertion from early endosomes to the plasma membrane. In terms of processing, phosphorylated by PKA, which inhibits activity. Phosphorylation at Ser-669 by SGK1 is associated with increased abundance at the cell membrane.

It is found in the apical cell membrane. It localises to the cell membrane. Its subcellular location is the recycling endosome membrane. The protein resides in the early endosome membrane. The catalysed reaction is Na(+)(in) + H(+)(out) = Na(+)(out) + H(+)(in). Its activity is regulated as follows. Seems to switch between active and inactive modes in response to various stimuli. Activated directly or indirectly by membrane phosphatidylinositol (PIs). Regulated by a variety of auxiliary proteins, which facilitate the maturation, cell surface expression and function of the transporter. Inhibited specifically by the drug tenapanor. Plasma membrane Na(+)/H(+) antiporter. Exchanges intracellular H(+) ions for extracellular Na(+) in 1:1 stoichiometry, playing a key role in salt and fluid absorption and pH homeostasis. Major apical Na(+)/H(+) exchanger in kidney and intestine playing an important role in renal and intestine Na(+) absorption and blood pressure regulation. The protein is Sodium/hydrogen exchanger 3 (SLC9A3) of Didelphis virginiana (North American opossum).